Consider the following 640-residue polypeptide: Telomere repeat-binding protein 4 (640 aa).

A Ubiquitin-like domain is found at 343–422 (VKFSIKSLRI…LGNLGFTLEP (80 aa)). The interval 442–464 (TDSTKLSERSAASPALETGIPLP) is disordered. One can recognise an HTH myb-type domain in the interval 530 to 589 (SQRRTRRPFSVTEVEALVSAVEEVGTGRWRDVKLRSFENASHRTYVDLKDKWKTLVHTAS). A DNA-binding region (H-T-H motif) is located at residues 558-585 (WRDVKLRSFENASHRTYVDLKDKWKTLV).

Homomultimer. Interacts with SNL1 (via PAH2). Interacts with STO. In terms of tissue distribution, expressed ubiquitously. Highest expression in flowers and roots.

The protein resides in the nucleus. In terms of biological role, binds specifically to the plant telomeric double-stranded DNA sequences 5'-TTTAGGG-3'. At least 2 repeats of telomeric sequences are required for binding. Induces DNA bending. This chain is Telomere repeat-binding protein 4 (TRP4), found in Arabidopsis thaliana (Mouse-ear cress).